A 938-amino-acid polypeptide reads, in one-letter code: Isoleucine--tRNA ligase (938 aa).

A 'HIGH' region motif is present at residues 58-68 (PYANGSIHIGH). Position 561 (Glu-561) interacts with L-isoleucyl-5'-AMP. The short motif at 602–606 (KMSKS) is the 'KMSKS' region element. Lys-605 serves as a coordination point for ATP. Residues Cys-901, Cys-904, Cys-921, and Cys-924 each coordinate Zn(2+).

Belongs to the class-I aminoacyl-tRNA synthetase family. IleS type 1 subfamily. Monomer. It depends on Zn(2+) as a cofactor.

The protein resides in the cytoplasm. It catalyses the reaction tRNA(Ile) + L-isoleucine + ATP = L-isoleucyl-tRNA(Ile) + AMP + diphosphate. Its function is as follows. Catalyzes the attachment of isoleucine to tRNA(Ile). As IleRS can inadvertently accommodate and process structurally similar amino acids such as valine, to avoid such errors it has two additional distinct tRNA(Ile)-dependent editing activities. One activity is designated as 'pretransfer' editing and involves the hydrolysis of activated Val-AMP. The other activity is designated 'posttransfer' editing and involves deacylation of mischarged Val-tRNA(Ile). This is Isoleucine--tRNA ligase from Erwinia tasmaniensis (strain DSM 17950 / CFBP 7177 / CIP 109463 / NCPPB 4357 / Et1/99).